The following is a 151-amino-acid chain: Tetratricopeptide repeat protein 32 (151 aa).

TPR repeat units lie at residues 8–41, 58–91, and 92–125; these read SHAT…CACA, ATAY…QPNF, and EVPY…NPGF.

The polypeptide is Tetratricopeptide repeat protein 32 (TTC32) (Homo sapiens (Human)).